Consider the following 413-residue polypeptide: MSIKINNVKGTRDLFGEQLEKMRLIEQVAKNLSIRYLFTELETPIIEHTELFIRNLGETSDVVNKEIYSFQDKSGHNICLRPEFTAAVTRAFVENFQHIQSPVRLFSFGPLFRYERPQKGRYRQFHQVNFEWIGAKHYLWAVEAIVLAKSFLKEIGIRCEIRVNSLGCSRTREEYKLALINYFQQYKEHLSADSLLRLKKNPLRILDSKDPSEKEIVVGAPRILDYHTDDALKEFESICDILKLLDIEFSVDHRLVRGLDYYSGLIFEFTSPDLGAQDALLGGGAYEQLSENLGGKKVQSIGFAAGIERLIDIMPVLAPTSDKIVSIVPIGEIAEREALKLLFYLRSEGLCADMCYGLSVKSRMKRAERSTVTVILGEEEFSRGESTVRIMETGQQMTVAHEKLLSTLRELLC.

It belongs to the class-II aminoacyl-tRNA synthetase family. As to quaternary structure, homodimer.

The protein localises to the cytoplasm. The catalysed reaction is tRNA(His) + L-histidine + ATP = L-histidyl-tRNA(His) + AMP + diphosphate + H(+). The chain is Histidine--tRNA ligase from Neorickettsia sennetsu (strain ATCC VR-367 / Miyayama) (Ehrlichia sennetsu).